The chain runs to 129 residues: Small ribosomal subunit protein uS8 (129 aa).

This sequence belongs to the universal ribosomal protein uS8 family. As to quaternary structure, part of the 30S ribosomal subunit.

One of the primary rRNA binding proteins, it binds directly to 16S rRNA central domain where it helps coordinate assembly of the platform of the 30S subunit. The sequence is that of Small ribosomal subunit protein uS8 from Archaeoglobus fulgidus (strain ATCC 49558 / DSM 4304 / JCM 9628 / NBRC 100126 / VC-16).